We begin with the raw amino-acid sequence, 961 residues long: Lon protease homolog, mitochondrial (961 aa).

The transit peptide at 1 to 67 (MAGGTGCVRL…SPAAAGHWRG (67 aa)) directs the protein to the mitochondrion. Disordered stretches follow at residues 76–103 (GGGAFSGGEDASEGGAEDGASGVGGSAG) and 220–262 (QLEV…VVVG). One can recognise a Lon N-terminal domain in the interval 125 to 371 (LPLIAVTRNP…KALSLLKKEF (247 aa)). Residues 235–244 (KLRKKPKRGK) show a composition bias toward basic residues. Positions 245 to 257 (KEAEEDGATKRPL) are enriched in basic and acidic residues. Residue 524–531 (GPPGVGKT) participates in ATP binding. The 192-residue stretch at 760-951 (VTPPGVVMGL…REIFDIAFPE (192 aa)) folds into the Lon proteolytic domain. Basic and acidic residues predominate over residues 784–801 (SLRRPRDRDSDKGDKDGS). Residues 784–803 (SLRRPRDRDSDKGDKDGSLE) form a disordered region. Residues S857 and K900 contribute to the active site.

Belongs to the peptidase S16 family. Homohexamer. Organized in a ring with a central cavity. The ATP-binding and proteolytic domains (AP-domain) form a hexameric chamber, while the N-terminal domain is arranged as a trimer of dimers. DNA and RNA binding is stimulated by substrate and inhibited by ATP binding. Interacts with TWNK and mitochondrial DNA polymerase subunit POLG.

The protein localises to the mitochondrion matrix. The enzyme catalyses Hydrolysis of proteins in presence of ATP.. In terms of biological role, ATP-dependent serine protease that mediates the selective degradation of misfolded, unassembled or oxidatively damaged polypeptides as well as certain short-lived regulatory proteins in the mitochondrial matrix. Endogenous substrates include mitochondrial steroidogenic acute regulatory (StAR) protein, DELE1, helicase Twinkle (TWNK) and the large ribosomal subunit protein MRPL32/bL32m. MRPL32/bL32m is protected from degradation by LONP1 when it is bound to a nucleic acid (RNA), but TWNK is not. May also have a chaperone function in the assembly of inner membrane protein complexes. Participates in the regulation of mitochondrial gene expression and in the maintenance of the integrity of the mitochondrial genome. Binds to mitochondrial promoters and RNA in a single-stranded, site-specific, and strand-specific manner. May regulate mitochondrial DNA replication and/or gene expression using site-specific, single-stranded DNA binding to target the degradation of regulatory proteins binding to adjacent sites in mitochondrial promoters. This is Lon protease homolog, mitochondrial from Bos taurus (Bovine).